We begin with the raw amino-acid sequence, 61 residues long: UPF0434 protein Avin_14770 (61 aa).

It belongs to the UPF0434 family.

In Azotobacter vinelandii (strain DJ / ATCC BAA-1303), this protein is UPF0434 protein Avin_14770.